Reading from the N-terminus, the 31-residue chain is Photosystem II reaction center protein T (31 aa).

A helical membrane pass occupies residues 3 to 23; the sequence is SLVYIFVFVVALGVLFFAIAF.

The protein belongs to the PsbT family. PSII is composed of 1 copy each of membrane proteins PsbA, PsbB, PsbC, PsbD, PsbE, PsbF, PsbH, PsbI, PsbJ, PsbK, PsbL, PsbM, PsbT, PsbX, PsbY, PsbZ, Psb30/Ycf12, peripheral proteins PsbO, CyanoQ (PsbQ), PsbU, PsbV and a large number of cofactors. It forms dimeric complexes.

The protein resides in the cellular thylakoid membrane. Found at the monomer-monomer interface of the photosystem II (PS II) dimer, plays a role in assembly and dimerization of PSII. PSII is a light-driven water plastoquinone oxidoreductase, using light energy to abstract electrons from H(2)O, generating a proton gradient subsequently used for ATP formation. This Synechococcus elongatus (strain ATCC 33912 / PCC 7942 / FACHB-805) (Anacystis nidulans R2) protein is Photosystem II reaction center protein T.